The following is a 301-amino-acid chain: GTPase Era (301 aa).

In terms of domain architecture, Era-type G spans 7-175 (YCGFIAIVGR…AAIVRKHLPE (169 aa)). The segment at 15 to 22 (GRPNVGKS) is G1. A GTP-binding site is contributed by 15–22 (GRPNVGKS). Positions 41–45 (QTTRH) are G2. The tract at residues 62–65 (DTPG) is G3. GTP is bound by residues 62–66 (DTPGL) and 124–127 (NKVD). A G4 region spans residues 124 to 127 (NKVD). The segment at 154–156 (ISA) is G5. In terms of domain architecture, KH type-2 spans 206–283 (LGAELPYSVT…HLELWVKVKS (78 aa)).

This sequence belongs to the TRAFAC class TrmE-Era-EngA-EngB-Septin-like GTPase superfamily. Era GTPase family. In terms of assembly, monomer.

The protein localises to the cytoplasm. It localises to the cell inner membrane. In terms of biological role, an essential GTPase that binds both GDP and GTP, with rapid nucleotide exchange. Plays a role in 16S rRNA processing and 30S ribosomal subunit biogenesis and possibly also in cell cycle regulation and energy metabolism. This Cronobacter sakazakii (strain ATCC BAA-894) (Enterobacter sakazakii) protein is GTPase Era.